A 135-amino-acid chain; its full sequence is uncharacterized protein (135 aa).

The region spanning 8-123 is the HotDog ACOT-type domain; the sequence is PQGTIVLKTL…IFIYVAIDET (116 aa).

Belongs to the acyl coenzyme A hydrolase family.

This is an uncharacterized protein from Buchnera aphidicola subsp. Schizaphis graminum (strain Sg).